We begin with the raw amino-acid sequence, 1113 residues long: Translation initiation factor IF-2 (1113 aa).

4 stretches are compositionally biased toward polar residues: residues 56–72 (QSNQ…SSKE), 129–139 (KANTSNQSKGV), 162–187 (LENN…TQLV), and 194–205 (TKNNEPPQQKTS). 2 disordered regions span residues 56–446 (QSNQ…IGEN) and 470–504 (LARP…RQRR). A compositionally biased stretch (low complexity) spans 248–265 (PVQPRTQNNQNRQRIPNK). Positions 415-429 (RRSDWDDAAKLEALR) are enriched in basic and acidic residues. 2 stretches are compositionally biased toward basic residues: residues 474-483 (AKPKSTKKSN) and 490-504 (TRKR…RQRR). A tr-type G domain is found at 605 to 777 (RRPPVVTVMG…VLLVTEVEDL (173 aa)). A G1 region spans residues 614-621 (GHVDHGKT). 614-621 (GHVDHGKT) lines the GTP pocket. Residues 639–643 (GITQH) form a G2 region. The segment at 664–667 (DTPG) is G3. Residues 664–668 (DTPGH) and 718–721 (NKID) contribute to the GTP site. The G4 stretch occupies residues 718–721 (NKID). The G5 stretch occupies residues 754–756 (SAI).

The protein belongs to the TRAFAC class translation factor GTPase superfamily. Classic translation factor GTPase family. IF-2 subfamily.

It localises to the cytoplasm. Its function is as follows. One of the essential components for the initiation of protein synthesis. Protects formylmethionyl-tRNA from spontaneous hydrolysis and promotes its binding to the 30S ribosomal subunits. Also involved in the hydrolysis of GTP during the formation of the 70S ribosomal complex. In Prochlorococcus marinus (strain MIT 9211), this protein is Translation initiation factor IF-2.